Here is a 308-residue protein sequence, read N- to C-terminus: D-alanine--D-alanine ligase (308 aa).

An ATP-grasp domain is found at 103–302 (KTVMATAGVP…FDELVQWMVE (200 aa)). 130 to 184 (MAPPYVIKPVADGSSVGVFMVTEAHEHPPQELFRDDWPHGEQLLVEKYVAGKELT) contacts ATP. Mg(2+) contacts are provided by Asp252, Glu269, and Asn271.

Belongs to the D-alanine--D-alanine ligase family. Mg(2+) serves as cofactor. The cofactor is Mn(2+).

It localises to the cytoplasm. The enzyme catalyses 2 D-alanine + ATP = D-alanyl-D-alanine + ADP + phosphate + H(+). It functions in the pathway cell wall biogenesis; peptidoglycan biosynthesis. In terms of biological role, cell wall formation. The chain is D-alanine--D-alanine ligase from Rhodopseudomonas palustris (strain BisB18).